The following is a 223-amino-acid chain: DNA mismatch repair protein MutH (223 aa).

The protein belongs to the MutH family.

It localises to the cytoplasm. Functionally, sequence-specific endonuclease that cleaves unmethylated GATC sequences. It is involved in DNA mismatch repair. The chain is DNA mismatch repair protein MutH from Haemophilus influenzae (strain PittGG).